A 126-amino-acid polypeptide reads, in one-letter code: MAILGLGTDIVEIARIEAVIARSGDRLARRVLSDHEWSIWEQHQQPVRFLAKRFAVKEAAAKALGTGIRNGLAFNQFEVYNDELGKPKLRLWGEAKLLAERMGVRAIHVTLADERHYACATVIVES.

Residues Asp9 and Glu58 each coordinate Mg(2+).

The protein belongs to the P-Pant transferase superfamily. AcpS family. Requires Mg(2+) as cofactor.

The protein resides in the cytoplasm. The enzyme catalyses apo-[ACP] + CoA = holo-[ACP] + adenosine 3',5'-bisphosphate + H(+). Functionally, transfers the 4'-phosphopantetheine moiety from coenzyme A to a Ser of acyl-carrier-protein. In Klebsiella pneumoniae (strain 342), this protein is Holo-[acyl-carrier-protein] synthase.